Reading from the N-terminus, the 721-residue chain is BRCA1-A complex subunit RAP80 (721 aa).

Residues 1-65 are disordered; it reads MPRRKKKGKE…GLQKTKIKQS (65 aa). Residues 1–101 form a necessary for transcriptional repression region; it reads MPRRKKKGKE…SEQEAREVNS (101 aa). K20 participates in a covalent cross-link: Glycyl lysine isopeptide (Lys-Gly) (interchain with G-Cter in SUMO2). A Phosphoserine modification is found at S29. K31 is covalently cross-linked (Glycyl lysine isopeptide (Lys-Gly) (interchain with G-Cter in SUMO2)). 2 positions are modified to phosphoserine: S44 and S46. The LR motif signature appears at 60–78; sequence TKIKQSSRAKCLAKRKIAQ. Glycyl lysine isopeptide (Lys-Gly) (interchain with G-Cter in SUMO2) cross-links involve residues K75 and K90. The UIM 1 domain maps to 80-99; that stretch reads TEEEQFALALKMSEQEAREV. The interval 93–204 is disordered; the sequence is EQEAREVNSQ…SVSSGSWDQS (112 aa). Positions 97–103 are UIM-linker; that stretch reads REVNSQE. Residues 100–200 form a necessary for interaction with NR6A1 N-terminus region; the sequence is NSQEEEEEEL…EEPVSVSSGS (101 aa). S101 carries the phosphoserine modification. In terms of domain architecture, UIM 2 spans 105 to 124; it reads EEEELLRKAIAESLNSCRPS. Positions 117-130 are enriched in polar residues; it reads SLNSCRPSDASATR. A Phosphoserine modification is found at S140. Over residues 194–204 the composition is skewed to low complexity; sequence VSVSSGSWDQS. S205 bears the Phosphoserine mark. A Glycyl lysine isopeptide (Lys-Gly) (interchain with G-Cter in SUMO2) cross-link involves residue K245. The tract at residues 270 to 400 is AIR; that stretch reads TGGTVNYFWG…EEEPTTSHGQ (131 aa). The tract at residues 334–369 is disordered; sequence NECGQGEQASEKNEGISEDMGDEDKEERQESRASVW. A compositionally biased stretch (acidic residues) spans 349 to 358; the sequence is ISEDMGDEDK. Residues K382 and K387 each participate in a glycyl lysine isopeptide (Lys-Gly) (interchain with G-Cter in SUMO2) cross-link. The disordered stretch occupies residues 391-418; it reads EEEPTTSHGQSSQGLFVEETSEEGNSVP. Residues 400 to 500 are necessary for interaction with NR6A1 C-terminus; it reads QSSQGLFVEE…EIHTSTFSSS (101 aa). Residues S402 and S420 each carry the phosphoserine modification. Residue K429 forms a Glycyl lysine isopeptide (Lys-Gly) (interchain with G-Cter in SUMO2) linkage. S467 bears the Phosphoserine mark. The UBZ4-type zinc finger occupies 502 to 529; that stretch reads QVSCPLCDQGFPPTKIERHAMYCNGLMG. Zn(2+) is bound by residues C505, C508, H520, and C524. A zinc-finger-like region region spans residues 505 to 582; it reads CPLCDQGFPP…REYQCHVESC (78 aa). Residues K544, K559, K562, and K607 each participate in a glycyl lysine isopeptide (Lys-Gly) (interchain with G-Cter in SUMO2) cross-link. A Phosphoserine modification is found at S627. Residues K635 and K642 each participate in a glycyl lysine isopeptide (Lys-Gly) (interchain with G-Cter in SUMO2) cross-link. Residues S655 and S679 each carry the phosphoserine modification. Residues K698 and K699 each participate in a glycyl lysine isopeptide (Lys-Gly) (interchain with G-Cter in SUMO2) cross-link.

It belongs to the RAP80 family. In terms of assembly, component of the ARISC complex, at least composed of UIMC1/RAP80, ABRAXAS1, BRCC3/BRCC36, BABAM2 and BABAM1/NBA1. Component of the BRCA1-A complex, at least composed of the BRCA1, BARD1, UIMC1/RAP80, ABRAXAS1, BRCC3/BRCC36, BABAM2 and BABAM1/NBA1. In the BRCA1-A complex, interacts directly with ABRAXAS1. Interacts with UBE2I. Interacts with NR6A1. Interacts with ESR1. Interacts with TSP57. Interacts with TRAIP. Post-translationally, sumoylated. In terms of processing, phosphorylated upon DNA damage by ATM or ATR.

It is found in the nucleus. Its function is as follows. Ubiquitin-binding protein. Specifically recognizes and binds 'Lys-63'-linked ubiquitin. Plays a central role in the BRCA1-A complex by specifically binding 'Lys-63'-linked ubiquitinated histones H2A and H2AX at DNA lesions sites, leading to target the BRCA1-BARD1 heterodimer to sites of DNA damage at double-strand breaks (DSBs). The BRCA1-A complex also possesses deubiquitinase activity that specifically removes 'Lys-63'-linked ubiquitin on histones H2A and H2AX. Also weakly binds monoubiquitin but with much less affinity than 'Lys-63'-linked ubiquitin. May interact with monoubiquitinated histones H2A and H2B; the relevance of such results is however unclear in vivo. Does not bind Lys-48'-linked ubiquitin. May indirectly act as a transcriptional repressor by inhibiting the interaction of NR6A1 with the corepressor NCOR1. The protein is BRCA1-A complex subunit RAP80 (UIMC1) of Sus scrofa (Pig).